The primary structure comprises 1101 residues: Nuclear pore complex protein NUP107 (1101 aa).

Belongs to the nucleoporin Nup84/Nup107 family. Part of the nuclear pore complex (NPC). The NPC has an eight-fold symmetrical structure comprising a central transport channel and two rings, the cytoplasmic and nuclear rings, to which eight filaments are attached. The cytoplasmic filaments have loose ends, while the nuclear filaments are joined in a distal ring, forming a nuclear basket. NPCs are highly dynamic in configuration and composition, and can be devided in 3 subcomplexes, the NUP62 subcomplex, the NUP107-160 subcomplex and the NUP93 subcomplex, containing approximately 30 different nucleoporin proteins.

It localises to the nucleus envelope. The protein resides in the nucleus. Its subcellular location is the nuclear pore complex. This Arabidopsis thaliana (Mouse-ear cress) protein is Nuclear pore complex protein NUP107.